We begin with the raw amino-acid sequence, 362 residues long: Phospho-N-acetylmuramoyl-pentapeptide-transferase (362 aa).

The next 10 membrane-spanning stretches (helical) occupy residues 28 to 48, 73 to 93, 100 to 120, 134 to 154, 169 to 189, 201 to 221, 241 to 261, 264 to 284, 290 to 310, and 339 to 359; these read GATV…IALL, TPTM…LLWA, VWIV…DDYL, VKLF…VLVS, TLLI…IVGS, GLAI…VYLV, LAVF…YNAP, MVFM…AIAV, LVLA…IVQV, and TVVV…LATL.

The protein belongs to the glycosyltransferase 4 family. MraY subfamily. Mg(2+) is required as a cofactor.

It is found in the cell inner membrane. It catalyses the reaction UDP-N-acetyl-alpha-D-muramoyl-L-alanyl-gamma-D-glutamyl-meso-2,6-diaminopimeloyl-D-alanyl-D-alanine + di-trans,octa-cis-undecaprenyl phosphate = di-trans,octa-cis-undecaprenyl diphospho-N-acetyl-alpha-D-muramoyl-L-alanyl-D-glutamyl-meso-2,6-diaminopimeloyl-D-alanyl-D-alanine + UMP. The protein operates within cell wall biogenesis; peptidoglycan biosynthesis. In terms of biological role, catalyzes the initial step of the lipid cycle reactions in the biosynthesis of the cell wall peptidoglycan: transfers peptidoglycan precursor phospho-MurNAc-pentapeptide from UDP-MurNAc-pentapeptide onto the lipid carrier undecaprenyl phosphate, yielding undecaprenyl-pyrophosphoryl-MurNAc-pentapeptide, known as lipid I. The polypeptide is Phospho-N-acetylmuramoyl-pentapeptide-transferase (Parvibaculum lavamentivorans (strain DS-1 / DSM 13023 / NCIMB 13966)).